A 249-amino-acid chain; its full sequence is Putative TrmH family tRNA/rRNA methyltransferase YacO (249 aa).

Gly-198, Leu-218, and Leu-227 together coordinate S-adenosyl-L-methionine.

It belongs to the class IV-like SAM-binding methyltransferase superfamily. RNA methyltransferase TrmH family.

The polypeptide is Putative TrmH family tRNA/rRNA methyltransferase YacO (yacO) (Bacillus subtilis (strain 168)).